Consider the following 342-residue polypeptide: uncharacterized protein (342 aa).

9-31 (LIFGGTTGIGLMTTIDFIIHNTS) lines the NADP(+) pocket. S208 contacts substrate. Catalysis depends on Y222, which acts as the Proton acceptor.

This sequence belongs to the short-chain dehydrogenases/reductases (SDR) family.

This is an uncharacterized protein from Acanthamoeba polyphaga (Amoeba).